A 706-amino-acid chain; its full sequence is Amino-acid acetyltransferase, mitochondrial (706 aa).

Disordered regions lie at residues Met1–Asp25 and Asn367–Gln403. The N-terminal 35 residues, Met1 to Phe35, are a transit peptide targeting the mitochondrion. The span at Asn367–Val388 shows a compositional bias: polar residues. Over residues Ser389–Ala401 the composition is skewed to low complexity. An N-acetyltransferase domain is found at Thr527 to Pro696.

It belongs to the acetyltransferase family.

It is found in the mitochondrion. It catalyses the reaction L-glutamate + acetyl-CoA = N-acetyl-L-glutamate + CoA + H(+). It functions in the pathway amino-acid biosynthesis; L-arginine biosynthesis; N(2)-acetyl-L-ornithine from L-glutamate: step 1/4. N-acetylglutamate synthase involved in arginine biosynthesis. In Emericella nidulans (strain FGSC A4 / ATCC 38163 / CBS 112.46 / NRRL 194 / M139) (Aspergillus nidulans), this protein is Amino-acid acetyltransferase, mitochondrial (arg2).